Consider the following 346-residue polypeptide: MDLQKQLEELKISTQEKLKEMTGNHTKELQDLRVQVLGKKGSLTELLKGLKDLSNDLRPVVGKQVNEVRDILTKAFEEQAKVVEAAKIQAQLESESVDVTLPGRQMTLGHRHVLTQTSEEIEDIFLGMGFQVVGGFEVEKDYYNFERMNLPKDHPARDMQDTFYITEEILLRTHTSPVQARTMDQHDFSKGPLKMISPGRVFRRDTDDATHSHQFHQIEGLVVGENISMGDLKGTLQLISQKMFGAERKIRLRPSYFPFTEPSVEVDVSCFKCGGKGCNVCKQTGWIEILGAGMVHPSVLEMSGIDSEKYSGFAFGLGQERIAMLRYGINDIRGFYQGDVRFTDQF.

E261 contacts Mg(2+).

It belongs to the class-II aminoacyl-tRNA synthetase family. Phe-tRNA synthetase alpha subunit type 1 subfamily. Tetramer of two alpha and two beta subunits. Mg(2+) is required as a cofactor.

The protein localises to the cytoplasm. The enzyme catalyses tRNA(Phe) + L-phenylalanine + ATP = L-phenylalanyl-tRNA(Phe) + AMP + diphosphate + H(+). The polypeptide is Phenylalanine--tRNA ligase alpha subunit (Streptococcus agalactiae serotype III (strain NEM316)).